Reading from the N-terminus, the 113-residue chain is Hydrogenase maturation factor HypA (113 aa).

His2 lines the Ni(2+) pocket. Zn(2+) contacts are provided by Cys73, Cys76, Cys89, and Cys92.

This sequence belongs to the HypA/HybF family.

Its function is as follows. Involved in the maturation of [NiFe] hydrogenases. Required for nickel insertion into the metal center of the hydrogenase. This Aeromonas hydrophila subsp. hydrophila (strain ATCC 7966 / DSM 30187 / BCRC 13018 / CCUG 14551 / JCM 1027 / KCTC 2358 / NCIMB 9240 / NCTC 8049) protein is Hydrogenase maturation factor HypA.